The following is a 48-amino-acid chain: uncharacterized protein (48 aa).

This is an uncharacterized protein from Schizosaccharomyces pombe (strain 972 / ATCC 24843) (Fission yeast).